The chain runs to 537 residues: O-phosphoserine--tRNA(Cys) ligase (537 aa).

Residues 186-188, 231-233, 273-274, and Asn-317 contribute to the substrate site; these read HMT, SAS, and YY.

The protein belongs to the class-II aminoacyl-tRNA synthetase family. O-phosphoseryl-tRNA(Cys) synthetase subfamily. As to quaternary structure, homotetramer. Interacts with SepCysS.

The enzyme catalyses tRNA(Cys) + O-phospho-L-serine + ATP = O-phospho-L-seryl-tRNA(Cys) + AMP + diphosphate. Functionally, catalyzes the attachment of O-phosphoserine (Sep) to tRNA(Cys). The polypeptide is O-phosphoserine--tRNA(Cys) ligase (Methanococcus maripaludis (strain DSM 14266 / JCM 13030 / NBRC 101832 / S2 / LL)).